A 617-amino-acid chain; its full sequence is RNA polymerase sigma factor RpoD (617 aa).

Positions 192-222 (NITNDSNENEDENEDENEDEDENSIDPELAN) are disordered. The span at 198–216 (NENEDENEDENEDEDENSI) shows a compositional bias: acidic residues. Residues 383–453 (MVEANLRLVI…TRSIADQART (71 aa)) form a sigma-70 factor domain-2 region. The Interaction with polymerase core subunit RpoC signature appears at 407–410 (DLIQ). A sigma-70 factor domain-3 region spans residues 462-538 (ETINKLNRIS…DTTLELPLDS (77 aa)). The interval 551 to 604 (VLSGLTAREAKVLRMRFGIDMNTDHTLEEVGKQFDVTRERIRQIEAKALRKLRH) is sigma-70 factor domain-4. The H-T-H motif DNA-binding region spans 577–596 (LEEVGKQFDVTRERIRQIEA).

It belongs to the sigma-70 factor family. RpoD/SigA subfamily. In terms of assembly, interacts transiently with the RNA polymerase catalytic core.

It localises to the cytoplasm. Sigma factors are initiation factors that promote the attachment of RNA polymerase to specific initiation sites and are then released. This sigma factor is the primary sigma factor during exponential growth. The chain is RNA polymerase sigma factor RpoD from Buchnera aphidicola subsp. Schizaphis graminum (strain Sg).